The primary structure comprises 324 residues: HTH-type transcriptional regulator CysB (324 aa).

Residues 1-59 (MKLQQLRYIVEVVNHNLNVSSTAEGLYTSQPGISKQVRMLEDELGIQIFARSGKHLTQV) form the HTH lysR-type domain. Residues 19 to 38 (VSSTAEGLYTSQPGISKQVR) constitute a DNA-binding region (H-T-H motif).

The protein belongs to the LysR transcriptional regulatory family. In terms of assembly, homotetramer.

The protein resides in the cytoplasm. Functionally, this protein is a positive regulator of gene expression for the cysteine regulon. The inducer for CysB is N-acetylserine. Thiosulfate and sulfide act as anti-inducers. This is HTH-type transcriptional regulator CysB (cysB) from Klebsiella pneumoniae.